The primary structure comprises 537 residues: Beta-hexosaminidase subunit beta (537 aa).

Residues 1-23 (MPGSPRRAPGLLLQALVAMVSLA) form the signal peptide. Asn62 carries an N-linked (GlcNAc...) asparagine glycan. The cysteines at positions 69 and 115 are disulfide-linked. 2 N-linked (GlcNAc...) asparagine glycosylation sites follow: Asn168 and Asn305. 2 cysteine pairs are disulfide-bonded: Cys287-Cys338 and Cys512-Cys529. Glu333 (proton donor) is an active-site residue.

This sequence belongs to the glycosyl hydrolase 20 family. There are 3 forms of beta-hexosaminidase: hexosaminidase A is a heterodimer composed of one subunit alpha and one subunit beta (chain A and B); hexosaminidase B is a homodimer of two beta subunits (two chains A and B); hexosaminidase S is a homodimer of two alpha subunits. The composition of the dimer (isozyme A versus isozyme S) has a significant effect on the substrate specificity of the alpha subunit active site.

The protein localises to the lysosome. Its subcellular location is the cytoplasmic vesicle. It localises to the secretory vesicle. The protein resides in the cortical granule. The catalysed reaction is Hydrolysis of terminal non-reducing N-acetyl-D-hexosamine residues in N-acetyl-beta-D-hexosaminides.. The enzyme catalyses N-acetyl-beta-D-galactosaminyl-(1-&gt;4)-beta-D-3-sulfogalactosyl-(1-&gt;4)-beta-D-glucosyl-(1&lt;-&gt;1')-ceramide + H2O = a beta-D-3-sulfogalactosyl-(1-&gt;4)-beta-D-glucosyl-(1&lt;-&gt;1')-ceramide + N-acetyl-beta-D-galactosamine. It carries out the reaction a ganglioside GM2 (d18:1(4E)) + H2O = a ganglioside GM3 (d18:1(4E)) + N-acetyl-beta-D-galactosamine. It catalyses the reaction a ganglioside GM2 + H2O = a ganglioside GM3 + N-acetyl-beta-D-galactosamine. The catalysed reaction is beta-D-GalNAc-(1-&gt;4)-alpha-L-IdoA-(1-&gt;3)-beta-D-GalNAc-4-sulfate-(1-&gt;4)-alpha-L-IdoA-(1-&gt;3)-D-GalNAc-4-sulfate + H2O = alpha-L-IdoA-(1-&gt;3)-beta-D-GalNAc-4-sulfate-(1-&gt;4)-alpha-L-IdoA-(1-&gt;3)-D-GalNAc-4-sulfate + N-acetyl-D-galactosamine. The enzyme catalyses N-acetyl-beta-D-6-sulfogalactosaminyl-(1-&gt;4)-alpha-L-iduronyl-(1-&gt;3)-N-acetyl-D-6-sulfogalactosamine + H2O = alpha-L-iduronyl-(1-&gt;3)-N-acetyl-D-6-sulfogalactosamine + N-acetyl-D-6-sulfogalactosamine. Its activity is regulated as follows. Addition of GM2A stimulates the hydrolysis of sulfated glycosphingolipid SM2 and the ganglioside GM2. Its function is as follows. Hydrolyzes the non-reducing end N-acetyl-D-hexosamine and/or sulfated N-acetyl-D-hexosamine of glycoconjugates, such as the oligosaccharide moieties from proteins and neutral glycolipids, or from certain mucopolysaccharides. The isozyme B does not hydrolyze each of these substrates, however hydrolyzes efficiently neutral oligosaccharide. Only the isozyme A is responsible for the degradation of GM2 gangliosides in the presence of GM2A. During fertilization is responsible, at least in part, for the zona block to polyspermy. Present in the cortical granules of non-activated oocytes, is exocytosed during the cortical reaction in response to oocyte activation and inactivates the sperm galactosyltransferase-binding site, accounting for the block in sperm binding to the zona pellucida. This chain is Beta-hexosaminidase subunit beta, found in Rattus norvegicus (Rat).